We begin with the raw amino-acid sequence, 246 residues long: Acetoacetyl-CoA reductase (246 aa).

NADP(+) is bound by residues 13–15 (GGI), glycine 35, arginine 40, 60–62 (GNV), and 88–92 (NAGIT). Substrate contacts are provided by residues aspartate 94 and 147 to 150 (QFGQ). Tyrosine 153 functions as the Proton acceptor in the catalytic mechanism. Residue 183 to 186 (PGYI) coordinates NADP(+). Residues 184–185 (GY) and arginine 195 contribute to the substrate site.

Belongs to the short-chain dehydrogenases/reductases (SDR) family. As to quaternary structure, homotetramer.

It is found in the cytoplasm. It catalyses the reaction a (3R)-3-hydroxyacyl-CoA + NADP(+) = a 3-oxoacyl-CoA + NADPH + H(+). It carries out the reaction (3R)-3-hydroxybutanoyl-CoA + NADP(+) = acetoacetyl-CoA + NADPH + H(+). It participates in biopolymer metabolism; poly-(R)-3-hydroxybutanoate biosynthesis. Catalyzes the chiral reduction of acetoacetyl-CoA to (R)-3-hydroxybutyryl-CoA. Is involved in the biosynthesis of polyhydroxybutyrate (PHB), which is accumulated as an intracellular energy reserve material when cells grow under conditions of nutrient limitation. The chain is Acetoacetyl-CoA reductase from Cupriavidus necator (strain ATCC 17699 / DSM 428 / KCTC 22496 / NCIMB 10442 / H16 / Stanier 337) (Ralstonia eutropha).